A 117-amino-acid polypeptide reads, in one-letter code: Alpha-endosulfine (117 aa).

The interval 1-53 (MAAPLGTGARAEDSGQEKQDSQEKETVIPERAEEAKLKAKYPNLGQKPGGSDF) is disordered. The span at 10–37 (RAEDSGQEKQDSQEKETVIPERAEEAKL) shows a compositional bias: basic and acidic residues. At S67 the chain carries Phosphoserine; by GWL. The disordered stretch occupies residues 76–117 (KMKNKQLPTAGPDKNLVTGDHIPKPQDLPQRKSSLVASKLAG).

The protein belongs to the endosulfine family. Phosphorylation at Ser-67 by GWL during mitosis is essential for interaction with PPP2R2D (PR55-delta) and subsequent inactivation of PP2A.

Its subcellular location is the cytoplasm. Its function is as follows. Protein phosphatase inhibitor that specifically inhibits protein phosphatase 2A (PP2A) during mitosis. When phosphorylated at Ser-67 during mitosis, specifically interacts with PPP2R2D (PR55-delta) and inhibits its activity, leading to inactivation of PP2A, an essential condition to keep cyclin-B1-CDK1 activity high during M phase. This Gallus gallus (Chicken) protein is Alpha-endosulfine (ENSA).